Reading from the N-terminus, the 726-residue chain is ATP-dependent permease MDL1, mitochondrial (726 aa).

A mitochondrion-targeting transit peptide spans 1-112 (MDPIRFGLSR…LAFLKLCVRH (112 aa)). N-linked (GlcNAc...) asparagine glycans are attached at residues Asn66, Asn113, and Asn132. 5 consecutive transmembrane segments (helical) span residues 158–178 (FFIAGSLLLVSSGVTMSIPYI), 196–216 (IMGIPSGTFYIGLLGLFFLGS), 306–326 (GYMSLIVPPIALGAFFYGEYV), 386–406 (GIFFGSTGFLGNATVIAILAL), and 423–443 (SFLLYTVYAGGSIVGLSGCFT). One can recognise an ABC transmembrane type-1 domain in the interval 158-447 (FFIAGSLLLV…LSGCFTDIMK (290 aa)). The region spanning 482 to 719 (LSFRNVGFAY…GTNFYKLMRW (238 aa)) is the ABC transporter domain. Asn502 carries an N-linked (GlcNAc...) asparagine glycan. 517-524 (APSGGGKS) provides a ligand contact to ATP. Residues Asn584, Asn598, and Asn668 are each glycosylated (N-linked (GlcNAc...) asparagine).

It belongs to the ABC transporter superfamily. ABCB family. Mitochondrial peptide exporter (TC 3.A.1.212) subfamily.

The protein resides in the mitochondrion inner membrane. Functionally, mediates export of peptides generated upon proteolysis of mitochondrial inner membrane proteins. In Schizosaccharomyces pombe (strain 972 / ATCC 24843) (Fission yeast), this protein is ATP-dependent permease MDL1, mitochondrial (mdl1).